The following is a 333-amino-acid chain: Holliday junction branch migration complex subunit RuvB (333 aa).

Residues 4-185 (IDRLVSTDVL…FGIVQRLEFY (182 aa)) form a large ATPase domain (RuvB-L) region. Residues I24, R25, G66, K69, T70, T71, 132–134 (EDY), R175, Y185, and R222 contribute to the ATP site. Mg(2+) is bound at residue T70. The tract at residues 186-256 (SVPDLEHIVS…IAIKALEMLN (71 aa)) is small ATPAse domain (RuvB-S). The interval 259 to 333 (KEGLDYMDSK…HAYQHFICGG (75 aa)) is head domain (RuvB-H). 3 residues coordinate DNA: R295, R314, and R319.

Belongs to the RuvB family. As to quaternary structure, homohexamer. Forms an RuvA(8)-RuvB(12)-Holliday junction (HJ) complex. HJ DNA is sandwiched between 2 RuvA tetramers; dsDNA enters through RuvA and exits via RuvB. An RuvB hexamer assembles on each DNA strand where it exits the tetramer. Each RuvB hexamer is contacted by two RuvA subunits (via domain III) on 2 adjacent RuvB subunits; this complex drives branch migration. In the full resolvosome a probable DNA-RuvA(4)-RuvB(12)-RuvC(2) complex forms which resolves the HJ.

The protein resides in the cytoplasm. The enzyme catalyses ATP + H2O = ADP + phosphate + H(+). In terms of biological role, the RuvA-RuvB-RuvC complex processes Holliday junction (HJ) DNA during genetic recombination and DNA repair, while the RuvA-RuvB complex plays an important role in the rescue of blocked DNA replication forks via replication fork reversal (RFR). RuvA specifically binds to HJ cruciform DNA, conferring on it an open structure. The RuvB hexamer acts as an ATP-dependent pump, pulling dsDNA into and through the RuvAB complex. RuvB forms 2 homohexamers on either side of HJ DNA bound by 1 or 2 RuvA tetramers; 4 subunits per hexamer contact DNA at a time. Coordinated motions by a converter formed by DNA-disengaged RuvB subunits stimulates ATP hydrolysis and nucleotide exchange. Immobilization of the converter enables RuvB to convert the ATP-contained energy into a lever motion, pulling 2 nucleotides of DNA out of the RuvA tetramer per ATP hydrolyzed, thus driving DNA branch migration. The RuvB motors rotate together with the DNA substrate, which together with the progressing nucleotide cycle form the mechanistic basis for DNA recombination by continuous HJ branch migration. Branch migration allows RuvC to scan DNA until it finds its consensus sequence, where it cleaves and resolves cruciform DNA. This Hamiltonella defensa subsp. Acyrthosiphon pisum (strain 5AT) protein is Holliday junction branch migration complex subunit RuvB.